A 294-amino-acid polypeptide reads, in one-letter code: MSHNDKNTHNYQISSLDKIINDSSVAIEFENVYFAYTEERMILKNVSFTINDNEYVCVIGHNGSGKSTISKVLTGLLKPKSGVIKLFGIEISAANLKYLRNNIGIVFQNPDNQFVGITAEDDIAFGLENRKVPPNKMWDIINDAAVATGIEDLLKKESLELSGGQKQRVAIASVLAINPKVIIFDESTSMLDPKGKNELKELMVSLRDVAKKTIISITHDMEEVVKADKVIVMSNGEVQYIGTPQEIFANEERLLKMQLDIPFTLKLAKTLKEKGLKIDLTLNNEELIEKICKN.

In terms of domain architecture, ABC transporter spans 27 to 260; it reads IEFENVYFAY…EERLLKMQLD (234 aa). 60–67 lines the ATP pocket; it reads GHNGSGKS.

The protein belongs to the ABC transporter superfamily. Energy-coupling factor EcfA family. As to quaternary structure, forms a stable energy-coupling factor (ECF) transporter complex composed of 2 membrane-embedded substrate-binding proteins (S component), 2 ATP-binding proteins (A component) and 2 transmembrane proteins (T component).

The protein resides in the cell membrane. In terms of biological role, ATP-binding (A) component of a common energy-coupling factor (ECF) ABC-transporter complex. Unlike classic ABC transporters this ECF transporter provides the energy necessary to transport a number of different substrates. This is Energy-coupling factor transporter ATP-binding protein EcfA1 from Ureaplasma parvum serovar 3 (strain ATCC 700970).